The sequence spans 718 residues: Glycine--tRNA ligase beta subunit (718 aa).

It belongs to the class-II aminoacyl-tRNA synthetase family. In terms of assembly, tetramer of two alpha and two beta subunits.

The protein resides in the cytoplasm. It carries out the reaction tRNA(Gly) + glycine + ATP = glycyl-tRNA(Gly) + AMP + diphosphate. The chain is Glycine--tRNA ligase beta subunit from Mesorhizobium japonicum (strain LMG 29417 / CECT 9101 / MAFF 303099) (Mesorhizobium loti (strain MAFF 303099)).